The following is a 1234-amino-acid chain: Coiled-coil domain-containing protein CG32809 (1234 aa).

Positions 1-11 (MLIRWKSKDKS) are enriched in basic and acidic residues. 3 disordered regions span residues 1-88 (MLIR…HAHQ), 107-129 (KNKK…FDDD), and 330-350 (KVSM…NYEE). Low complexity predominate over residues 12–25 (ASSNQSVGGSSSSS). Basic and acidic residues predominate over residues 55 to 69 (GDERRRAMRRDDPRR). Positions 412 to 436 (HRIRVEHMERQLANLTGLVQKALVN) form a coiled coil. The disordered stretch occupies residues 498–548 (DIQGIPKSHNPLHAAETKPTKPAIKSSTLPRTSSQERDRLKPPPPPKPIVL). Coiled-coil stretches lie at residues 565 to 594 (EVYN…SQAQ) and 630 to 666 (TRIS…EVIN). Disordered regions lie at residues 754-793 (EQRL…ALSG), 815-852 (IAQQ…DESA), 928-1011 (LHSY…PPNQ), and 1028-1070 (SANA…ESGN). Composition is skewed to low complexity over residues 817-837 (QQQQ…QHQQ), 952-965 (TSSS…GSSS), 993-1004 (TSSRSPLASPTS), 1028-1039 (SANANANANSNA), and 1046-1068 (VGET…GNES). Residues 1077–1105 (VALEMRHQELLKKQKMLQEQYQRLQQMSK) are a coiled coil.

In Drosophila melanogaster (Fruit fly), this protein is Coiled-coil domain-containing protein CG32809.